Reading from the N-terminus, the 67-residue chain is Pepsin B (67 aa).

A propeptide spans 1–43 (activation peptide); sequence MERIILRKGKSIREAMEEQGVLEKFLKNRPKIDPAAKYHFNND.

This sequence belongs to the peptidase A1 family.

The protein resides in the secreted. It carries out the reaction Degradation of gelatin, little activity on hemoglobin. Specificity on B chain of insulin more restricted than that of pepsin A. Does not cleave 1-Phe-|-Val-2, 4-Gln-|-His-5 or 23-Gly-|-Phe-24.. This chain is Pepsin B (PGB), found in Sus scrofa (Pig).